A 107-amino-acid chain; its full sequence is Flagellar transcriptional regulator FlhD (107 aa).

The protein belongs to the FlhD family. Homodimer; disulfide-linked. Forms a heterohexamer composed of two FlhC and four FlhD subunits. Each FlhC binds a FlhD dimer, forming a heterotrimer, and a hexamer assembles by dimerization of two heterotrimers.

The protein localises to the cytoplasm. Functions in complex with FlhC as a master transcriptional regulator that regulates transcription of several flagellar and non-flagellar operons by binding to their promoter region. Activates expression of class 2 flagellar genes, including fliA, which is a flagellum-specific sigma factor that turns on the class 3 genes. Also regulates genes whose products function in a variety of physiological pathways. This is Flagellar transcriptional regulator FlhD from Bordetella avium (strain 197N).